The sequence spans 270 residues: Beta carbonic anhydrase 1 (270 aa).

Residues cysteine 39, aspartate 41, histidine 105, and cysteine 108 each coordinate Zn(2+).

Belongs to the beta-class carbonic anhydrase family. In terms of assembly, oligomer. Zn(2+) serves as cofactor.

It carries out the reaction hydrogencarbonate + H(+) = CO2 + H2O. Reversible hydration of carbon dioxide. The protein is Beta carbonic anhydrase 1 (bca-1) of Caenorhabditis elegans.